The following is a 691-amino-acid chain: MEASRGPPRVKNKAAAPVQISAEQLLREATDRQEEALQKPTQRFEDLEELHEYQGRKRKEFESYCQRSGFNLKNWLQYAQWELEQKEYARSRSVFERALNLHANKVTLWIRYVEAELKSRNINFARNLLDRAVTHLPRVDKLWYKYVWVEEMLGNIPGVRQVFERWMEWQPDEAAWSAFIKLEQRYGEYDRAREIFTRFTMVHPEPRNWIKWSKFEEEYGTSDRVREVFERAIEELSKYGDEFVEERLFIAYARYEAKLHDLDRARAIYKFGLENLPRSKAMLLHKEYTTFEKQYGDREGVEDVVLSKRRRHYEDLVRENPKNYDVWFDYARLEEASGDIDRTREVYEKAIAQVPPTQAKRHWRRYIYLWIFFALWEETEAKNPERARQVYDTCLKLIPHRTFTFAKVWMHKAHFEIRQGDLAAARKTLGRAIGMCPKDRLFKGYIEMEQKLYEFGRCRILYEKHIAYNPANCSTWVKWAELERGLDDLDRARAILDMGIAQPVLDMPEVVWKSYIDFEEEEGEYDKTRSLYERLLDKADHPKVWISYAQFEINIPEEAGEGADEEQEQPVSDEAKARARRVFERAHQGFKDKEMKAERVSILNAWLVFEKTHGSAEDIEKIEKQMPRRTKKKRKLDDDTWEEYVDYIFPADEQVGKNLMNMMAKARARKQAEAEAAAKAAAADDGGESGE.

HAT repeat units follow at residues 52–84 (EYQG…WELE), 86–118 (KEYA…AELK), 120–152 (RNIN…VEEM), 154–185 (GNIP…LEQR), 187–218 (GEYD…FEEE), 220–258 (GTSD…YEAK), 260–294 (HDLD…FEKQ), 304–336 (VVLS…LEEA), 338–372 (GDID…LWIF), 382–418 (KNPE…FEIR), 420–451 (GDLA…MEQK), 453–485 (YEFG…LERG), 487–521 (DDLD…FEEE), 523–554 (GEYD…FEIN), 574–612 (EAKA…FEKT), and 617–650 (EDIE…YIFP).

This sequence belongs to the crooked-neck family. Associated with the spliceosome.

It is found in the nucleus. Involved in pre-mRNA splicing and cell cycle progression. Required for the spliceosome assembly and initiation of the DNA replication. This Pyricularia oryzae (strain 70-15 / ATCC MYA-4617 / FGSC 8958) (Rice blast fungus) protein is Pre-mRNA-splicing factor CLF1 (CLF1).